Consider the following 459-residue polypeptide: Glutamate--tRNA ligase 2 (459 aa).

The 'HIGH' region signature appears at 8–18 (PSPTGYLHIGG). Residues 237-241 (KLSKR) carry the 'KMSKS' region motif. An ATP-binding site is contributed by K240.

The protein belongs to the class-I aminoacyl-tRNA synthetase family. Glutamate--tRNA ligase type 1 subfamily. In terms of assembly, monomer.

The protein localises to the cytoplasm. It catalyses the reaction tRNA(Glu) + L-glutamate + ATP = L-glutamyl-tRNA(Glu) + AMP + diphosphate. Functionally, catalyzes the attachment of glutamate to tRNA(Glu) in a two-step reaction: glutamate is first activated by ATP to form Glu-AMP and then transferred to the acceptor end of tRNA(Glu). This is Glutamate--tRNA ligase 2 from Campylobacter curvus (strain 525.92).